Reading from the N-terminus, the 379-residue chain is Deoxyhypusine synthase (379 aa).

Residues 104 to 108 (SNLVS), 130 to 132 (TAG), glutamate 136, and aspartate 237 each bind NAD(+). Spermidine is bound at residue 135-136 (EE). Aspartate 242 lines the spermidine pocket. Residue glycine 293 participates in NAD(+) binding. Position 298 (histidine 298) interacts with spermidine. Position 318 to 319 (318 to 319 (TA)) interacts with NAD(+). Spermidine is bound by residues 324-326 (GSD) and 333-339 (EAVSWGK). Lysine 339 acts as the Nucleophile in catalysis. 352–353 (DA) provides a ligand contact to NAD(+).

It belongs to the deoxyhypusine synthase family. Homotetramer. Requires NAD(+) as cofactor.

It catalyses the reaction [eIF5A protein]-L-lysine + spermidine = [eIF5A protein]-deoxyhypusine + propane-1,3-diamine. The protein operates within protein modification; eIF5A hypusination. Its function is as follows. Catalyzes the NAD-dependent oxidative cleavage of spermidine and the subsequent transfer of the butylamine moiety of spermidine to the epsilon-amino group of a specific lysine residue of the eIF-5A precursor protein to form the intermediate deoxyhypusine residue. Also able to produce homospermidine from putrescine. The polypeptide is Deoxyhypusine synthase (DHS1) (Nicotiana tabacum (Common tobacco)).